The primary structure comprises 221 residues: Iron-sulfur cluster repair protein YtfE (221 aa).

Belongs to the RIC family. YtfE subfamily. Homodimer.

The protein localises to the cytoplasm. In terms of biological role, di-iron-containing protein involved in the repair of iron-sulfur clusters damaged by oxidative and nitrosative stress conditions. The polypeptide is Iron-sulfur cluster repair protein YtfE (Yersinia pestis bv. Antiqua (strain Antiqua)).